The primary structure comprises 200 residues: 3-isopropylmalate dehydratase small subunit (200 aa).

This sequence belongs to the LeuD family. LeuD type 1 subfamily. As to quaternary structure, heterodimer of LeuC and LeuD.

It catalyses the reaction (2R,3S)-3-isopropylmalate = (2S)-2-isopropylmalate. Its pathway is amino-acid biosynthesis; L-leucine biosynthesis; L-leucine from 3-methyl-2-oxobutanoate: step 2/4. Functionally, catalyzes the isomerization between 2-isopropylmalate and 3-isopropylmalate, via the formation of 2-isopropylmaleate. The chain is 3-isopropylmalate dehydratase small subunit from Aliivibrio salmonicida (strain LFI1238) (Vibrio salmonicida (strain LFI1238)).